Reading from the N-terminus, the 206-residue chain is Small ribosomal subunit protein uS4 (206 aa).

An S4 RNA-binding domain is found at 96-156 (CRLDNVVYRM…EKSSNQLRIV (61 aa)).

The protein belongs to the universal ribosomal protein uS4 family. As to quaternary structure, part of the 30S ribosomal subunit. Contacts protein S5. The interaction surface between S4 and S5 is involved in control of translational fidelity.

Functionally, one of the primary rRNA binding proteins, it binds directly to 16S rRNA where it nucleates assembly of the body of the 30S subunit. In terms of biological role, with S5 and S12 plays an important role in translational accuracy. The chain is Small ribosomal subunit protein uS4 from Pseudomonas putida (strain W619).